We begin with the raw amino-acid sequence, 145 residues long: S-adenosylmethionine synthase 2 (145 aa).

ATP contacts are provided by residues 6–7 (RK), Ala-23, Lys-27, and Lys-31. Lys-31 is an L-methionine binding site.

This sequence belongs to the AdoMet synthase family. As to quaternary structure, homotetramer. It depends on Mn(2+) as a cofactor. Mg(2+) is required as a cofactor. Co(2+) serves as cofactor. Requires K(+) as cofactor. As to expression, mainly in floral buds and roots.

It is found in the cytoplasm. It carries out the reaction L-methionine + ATP + H2O = S-adenosyl-L-methionine + phosphate + diphosphate. Its pathway is amino-acid biosynthesis; S-adenosyl-L-methionine biosynthesis; S-adenosyl-L-methionine from L-methionine: step 1/1. Catalyzes the formation of S-adenosylmethionine from methionine and ATP. The reaction comprises two steps that are both catalyzed by the same enzyme: formation of S-adenosylmethionine (AdoMet) and triphosphate, and subsequent hydrolysis of the triphosphate. The protein is S-adenosylmethionine synthase 2 (SMS-2) of Petroselinum crispum (Parsley).